We begin with the raw amino-acid sequence, 386 residues long: uncharacterized protein (386 aa).

11 helical membrane passes run 3–23 (WFSL…LVAI), 42–62 (LVGH…IFLW), 72–92 (FASF…SLFG), 102–122 (VPTI…LGVF), 145–165 (ILST…IAYF), 183–203 (FGGH…WLLL), 212–232 (WFLN…QIFL), 244–264 (TWGY…ITLV), 276–296 (ILVL…MIVG), 308–328 (VIAS…QELG), and 333–353 (LGKF…FLSS).

To R.prowazekii RP382.

It is found in the cell membrane. This is an uncharacterized protein from Aquifex aeolicus (strain VF5).